Reading from the N-terminus, the 702-residue chain is Polyribonucleotide nucleotidyltransferase (702 aa).

Mg(2+)-binding residues include Asp487 and Asp493. The 60-residue stretch at 554-613 folds into the KH domain; the sequence is PKILTMQINPDKIRDVIGPSGKQINKIIEETGVKIDIEQDGTIFISSVNEEMNKKAKKII. In terms of domain architecture, S1 motif spans 623–691; that stretch reads GQVYLGKVKR…KQGRVNLSRK (69 aa).

This sequence belongs to the polyribonucleotide nucleotidyltransferase family. It depends on Mg(2+) as a cofactor.

It is found in the cytoplasm. The catalysed reaction is RNA(n+1) + phosphate = RNA(n) + a ribonucleoside 5'-diphosphate. Functionally, involved in mRNA degradation. Catalyzes the phosphorolysis of single-stranded polyribonucleotides processively in the 3'- to 5'-direction. The sequence is that of Polyribonucleotide nucleotidyltransferase from Anoxybacillus flavithermus (strain DSM 21510 / WK1).